We begin with the raw amino-acid sequence, 66 residues long: Large ribosomal subunit protein bL31 (66 aa).

Zn(2+)-binding residues include Cys-16, Cys-18, Cys-36, and Cys-39.

The protein belongs to the bacterial ribosomal protein bL31 family. Type A subfamily. As to quaternary structure, part of the 50S ribosomal subunit. The cofactor is Zn(2+).

Binds the 23S rRNA. The polypeptide is Large ribosomal subunit protein bL31 (Geobacter metallireducens (strain ATCC 53774 / DSM 7210 / GS-15)).